Consider the following 142-residue polypeptide: Type II secretion system core protein G (142 aa).

Positions 1 to 8 (MQRRQQSG) are cleaved as a propeptide — leader sequence. Phe9 carries the N-methylphenylalanine modification. A helical membrane pass occupies residues 9 to 29 (FTLIEIMVVVVILGILAALVV). Positions 121-142 (SLGADGKEGGSDNDADIGNWDN) are disordered.

The protein belongs to the GSP G family. As to quaternary structure, type II secretion system is composed of four main components: the outer membrane complex, the inner membrane complex, the cytoplasmic secretion ATPase and the periplasm-spanning pseudopilus. Forms homomultimers. Interacts with pseudopilin tip ternary complex made of XcpX, XcpU, XcpV and XcpW. Interacts with PilA. Cleaved by the prepilin peptidase. Post-translationally, methylated by prepilin peptidase at the amino group of the N-terminal phenylalanine once the leader sequence is cleaved.

Its subcellular location is the cell inner membrane. Its function is as follows. Core component of the type II secretion system required for the energy-dependent secretion of extracellular factors such as proteases and toxins from the periplasm. Pseudopilin (pilin-like) protein that polymerizes to form the pseudopilus. Further polymerization triggers pseudopilus growth. Type II pseudopilus confers increased bacterial adhesive capabilities. The sequence is that of Type II secretion system core protein G (xcpT) from Pseudomonas aeruginosa (strain ATCC 15692 / DSM 22644 / CIP 104116 / JCM 14847 / LMG 12228 / 1C / PRS 101 / PAO1).